The following is a 1069-amino-acid chain: Carbamoyl phosphate synthase large chain (1069 aa).

A carboxyphosphate synthetic domain region spans residues 1 to 401 (MPLNKDIKRV…AFLKGIRSLE (401 aa)). The ATP site is built by arginine 129, arginine 169, glycine 175, glycine 176, lysine 208, valine 210, glutamate 215, glycine 241, isoleucine 242, histidine 243, glutamine 284, and glutamate 298. The ATP-grasp 1 domain occupies 133–327 (RDMMNRIGEP…IAKLAAKIAL (195 aa)). Mg(2+) is bound by residues glutamine 284, glutamate 298, and asparagine 300. Positions 284, 298, and 300 each coordinate Mn(2+). The oligomerization domain stretch occupies residues 402–549 (IGKYSLDHKK…YSTYEQYDEV (148 aa)). The carbamoyl phosphate synthetic domain stretch occupies residues 550–932 (EVSNRRKVIV…ALYKGFVGAN (383 aa)). The region spanning 674-864 (DELLERLDIS…IVDIATQVML (191 aa)) is the ATP-grasp 2 domain. The ATP site is built by arginine 710, lysine 749, leucine 751, glutamate 755, glycine 780, valine 781, histidine 782, serine 783, glutamine 823, and glutamate 835. Residues glutamine 823, glutamate 835, and asparagine 837 each contribute to the Mg(2+) site. The Mn(2+) site is built by glutamine 823, glutamate 835, and asparagine 837. The region spanning 932–1069 (NMYPSKEKGK…KDLEVFDITK (138 aa)) is the MGS-like domain. The tract at residues 933–1069 (MYPSKEKGKI…KDLEVFDITK (137 aa)) is allosteric domain.

It belongs to the CarB family. Composed of two chains; the small (or glutamine) chain promotes the hydrolysis of glutamine to ammonia, which is used by the large (or ammonia) chain to synthesize carbamoyl phosphate. Tetramer of heterodimers (alpha,beta)4. Mg(2+) serves as cofactor. Requires Mn(2+) as cofactor.

The enzyme catalyses hydrogencarbonate + L-glutamine + 2 ATP + H2O = carbamoyl phosphate + L-glutamate + 2 ADP + phosphate + 2 H(+). It catalyses the reaction hydrogencarbonate + NH4(+) + 2 ATP = carbamoyl phosphate + 2 ADP + phosphate + 2 H(+). It participates in amino-acid biosynthesis; L-arginine biosynthesis; carbamoyl phosphate from bicarbonate: step 1/1. The protein operates within pyrimidine metabolism; UMP biosynthesis via de novo pathway; (S)-dihydroorotate from bicarbonate: step 1/3. Functionally, large subunit of the glutamine-dependent carbamoyl phosphate synthetase (CPSase). CPSase catalyzes the formation of carbamoyl phosphate from the ammonia moiety of glutamine, carbonate, and phosphate donated by ATP, constituting the first step of 2 biosynthetic pathways, one leading to arginine and/or urea and the other to pyrimidine nucleotides. The large subunit (synthetase) binds the substrates ammonia (free or transferred from glutamine from the small subunit), hydrogencarbonate and ATP and carries out an ATP-coupled ligase reaction, activating hydrogencarbonate by forming carboxy phosphate which reacts with ammonia to form carbamoyl phosphate. The chain is Carbamoyl phosphate synthase large chain from Clostridium botulinum (strain Alaska E43 / Type E3).